Consider the following 133-residue polypeptide: Large ribosomal subunit protein eL14 (133 aa).

Belongs to the eukaryotic ribosomal protein eL14 family.

In Pisum sativum (Garden pea), this protein is Large ribosomal subunit protein eL14.